The chain runs to 558 residues: MATMEVEAAAATVLAAPLLSSSAILKLLLFVVTLSYLARALRRPRKSTTKCSSTTCASPPAGVGNPPLPPGPVPWPVVGNLPEMLLNKPAFRWIHQMMREMGTDIACVKLGGVHVVSITCPEIAREVLRKQDANFISRPLTFASETFSGGYRNAVLSPYGDQWKKMRRVLTSEIICPSRHAWLHDKRTDEADNLTRYVYNLATKAATGDVAVDVRHVARHYCGNVIRRLMFNRRYFGEPQADGGPGPMEVLHMDAVFTSLGLLYAFCVSDYLPWLRGLDLDGHEKIVKEANVAVNRLHDTVIDDRWRQWKSGERQEMEDFLDVLITLKDAQGNPLLTIEEVKAQSQDITFAAVDNPSNAVEWALAEMVNNPEVMAKAMEELDRVVGRERLVQESDIPKLNYVKACIREAFRLHPVAPFNVPHVALADTTIAGYRVPKGSHVILSRTGLGRNPRVWDEPLRFYPDRHLATAASDVALTENDLRFISFSTGRRGCIAASLGTAMSVMLFGRLLQGFTWSKPAGVEAVDLSESKSDTFMATPLVLHAEPRLPAHLYPSISI.

Residues 13–33 (VLAAPLLSSSAILKLLLFVVT) form a helical membrane-spanning segment. The segment at 48 to 67 (TTKCSSTTCASPPAGVGNPP) is disordered. Residues 49-65 (TKCSSTTCASPPAGVGN) are compositionally biased toward low complexity. Residues arginine 138, arginine 167, histidine 422, arginine 491, and cysteine 493 each coordinate heme b.

Belongs to the cytochrome P450 family. Heme b is required as a cofactor.

Its subcellular location is the endoplasmic reticulum membrane. The enzyme catalyses L-tyrosine + 2 reduced [NADPH--hemoprotein reductase] + 2 O2 = (E)-4-hydroxyphenylacetaldehyde oxime + 2 oxidized [NADPH--hemoprotein reductase] + CO2 + 3 H2O + 2 H(+). It carries out the reaction L-tyrosine + reduced [NADPH--hemoprotein reductase] + O2 = N-hydroxy-L-tyrosine + oxidized [NADPH--hemoprotein reductase] + H2O + 2 H(+). The catalysed reaction is N-hydroxy-L-tyrosine + reduced [NADPH--hemoprotein reductase] + O2 = N,N-dihydroxy-L-tyrosine + oxidized [NADPH--hemoprotein reductase] + H2O + H(+). It catalyses the reaction N,N-dihydroxy-L-tyrosine + H(+) = (E)-4-hydroxyphenylacetaldehyde oxime + CO2 + H2O. It functions in the pathway secondary metabolite biosynthesis; dhurrin biosynthesis; dhurrin from L-tyrosine: step 1/3. Its function is as follows. Cytochrome P450 involved in the biosynthesis of the cyanogenic glucoside dhurrin. Catalyzes the conversion of L-tyrosine to p-hydroxyphenylacetaldehyde oxime, via the N-hydroxy-L-tyrosine and N,N-dihydroxy-L-tyrosine intermediates. Produces the (E) isomer of the final oxime product. The sequence is that of Tyrosine N-monooxygenase (CYP79A1) from Sorghum bicolor (Sorghum).